The chain runs to 117 residues: Crustacean hyperglycemic hormones 3 (117 aa).

A signal peptide spans 1 to 24 (MVTPRMLSALSAVLLLVLTASSSA). Cystine bridges form between C50–C86, C66–C82, and C69–C95. A Valine amide modification is found at V115.

This sequence belongs to the arthropod CHH/MIH/GIH/VIH hormone family. Produced by the medulla terminalis X-organ in the eyestalks and transported to the sinus gland where they are stored and released.

Its subcellular location is the secreted. Hormone found in the sinus gland of isopods and decapods which controls the blood sugar level. Has a secretagogue action over the amylase released from the midgut gland. May act as a stress hormone and may be involved in the control of molting and reproduction. The sequence is that of Crustacean hyperglycemic hormones 3 from Penaeus japonicus (Kuruma prawn).